We begin with the raw amino-acid sequence, 129 residues long: Large ribosomal subunit protein bL12 (129 aa).

A compositionally biased stretch (basic and acidic residues) spans Met-95–Gly-123. Residues Met-95 to Lys-129 are disordered.

Belongs to the bacterial ribosomal protein bL12 family. In terms of assembly, homodimer. Part of the ribosomal stalk of the 50S ribosomal subunit. Forms a multimeric L10(L12)X complex, where L10 forms an elongated spine to which 2 to 4 L12 dimers bind in a sequential fashion. Binds GTP-bound translation factors.

Forms part of the ribosomal stalk which helps the ribosome interact with GTP-bound translation factors. Is thus essential for accurate translation. The sequence is that of Large ribosomal subunit protein bL12 from Acaryochloris marina (strain MBIC 11017).